Here is a 176-residue protein sequence, read N- to C-terminus: Peptide deformylase (176 aa).

Residues C94 and H136 each coordinate Fe cation. The active site involves E137. H140 lines the Fe cation pocket.

This sequence belongs to the polypeptide deformylase family. It depends on Fe(2+) as a cofactor.

The catalysed reaction is N-terminal N-formyl-L-methionyl-[peptide] + H2O = N-terminal L-methionyl-[peptide] + formate. In terms of biological role, removes the formyl group from the N-terminal Met of newly synthesized proteins. Requires at least a dipeptide for an efficient rate of reaction. N-terminal L-methionine is a prerequisite for activity but the enzyme has broad specificity at other positions. The protein is Peptide deformylase of Bartonella quintana (strain Toulouse) (Rochalimaea quintana).